The following is a 2896-amino-acid chain: Protein PRRC2C (2896 aa).

N6-acetyllysine is present on Lys-27. The disordered stretch occupies residues 28–212; sequence GKSLETQKTT…STAGTSEQND (185 aa). Residues 88-97 are compositionally biased toward basic and acidic residues; that stretch reads QEQHEEEKTP. Over residues 105–119 the composition is skewed to low complexity; sequence KPGVAAPPEVAPAPK. Positions 134–144 are enriched in polar residues; sequence QVNSQFQQEFP. Positions 151 to 160 are enriched in basic and acidic residues; the sequence is DQEKKEKETN. 2 positions are modified to phosphoserine: Ser-187 and Ser-191. The span at 201–211 shows a compositional bias: polar residues; sequence DESTAGTSEQN. An Asymmetric dimethylarginine; alternate modification is found at Arg-242. Residue Arg-242 is modified to Omega-N-methylarginine; alternate. Arg-255 and Arg-266 each carry asymmetric dimethylarginine. Disordered stretches follow at residues 264–729 and 750–788; these read PMRF…QHLA and SGRPAMDIPPIHPGMIPPKPLMRRDQMEGSPNSSESFEH. Omega-N-methylarginine occurs at positions 279 and 281. Positions 301-310 are enriched in basic and acidic residues; sequence ELKELDKFDN. Ser-335 carries the post-translational modification Phosphoserine. Polar residues predominate over residues 341 to 358; sequence GSNSPKENNSEDQGSKAS. Over residues 359–368 the composition is skewed to basic and acidic residues; it reads ENNENKKETD. Positions 370-381 are enriched in polar residues; the sequence is VSNTKSSSQIPA. Lys-392 is modified (N6-acetyllysine). 2 positions are modified to phosphoserine: Ser-395 and Ser-500. Residues 395–405 show a composition bias toward polar residues; it reads SFNQERGTSSH. Over residues 465 to 648 the composition is skewed to basic and acidic residues; it reads RREEEERRME…EATPVVHETE (184 aa). Over residues 676-708 the composition is skewed to low complexity; the sequence is QRQQEQMKQQQWQQQQQQGVLPQTVPSQPSSST. The segment covering 759–769 has biased composition (pro residues); that stretch reads PIHPGMIPPKP. Residues Ser-779, Ser-785, and Ser-801 each carry the phosphoserine modification. The disordered stretch occupies residues 804–1118; it reads RMLWGSDPYP…PVSTVQVEPA (315 aa). Composition is skewed to basic and acidic residues over residues 825–836, 852–867, and 878–888; these read ATEEPEDVRSEA, NQLEAHPKADFIRESS, and SVEDVRPHHTD. 4 positions are modified to phosphoserine: Ser-867, Ser-878, Ser-920, and Ser-929. Basic and acidic residues-rich tracts occupy residues 954-993, 1000-1010, and 1020-1058; these read IDSKEPIERPEEKPKKEGFIRSSEGPKPEKVYKSKSETRW, NRREEVNDRPV, and VLRDMKEEREQRKEKEGEKAEKVTEKVVVKPEKTEKKDL. Positions 1020 to 1046 form a coiled coil; it reads VLRDMKEEREQRKEKEGEKAEKVTEKV. Pro residues predominate over residues 1059 to 1081; it reads PPPPPPPQPPAPIQPQSVPPPIQ. A compositionally biased stretch (polar residues) spans 1089 to 1100; sequence STETATLAQKPS. Lys-1133 participates in a covalent cross-link: Glycyl lysine isopeptide (Lys-Gly) (interchain with G-Cter in SUMO2). Composition is skewed to basic and acidic residues over residues 1143–1163, 1170–1180, 1214–1230, and 1237–1248; these read SKDLVIERPRPDSRPAVKKES, YWKEARERDWF, HTRDYPQYRDNKPRAEH, and RQREESETRSES. 8 disordered regions span residues 1143-1647, 1670-1785, 1905-1991, 2005-2164, 2218-2238, 2257-2290, 2317-2341, and 2668-2701; these read SKDL…DALS, EDPQ…SAPV, APAS…TAEL, ISKK…VSEM, LPNTLPLPKRETIQQSSSLTS, WENSPNVREKGSPVTSTAPPIATGVSSSASGPST, GAGTYTTSSLSTKSTTTSDPPNICK, and DIKPGTPPIAGRSTTPTSSPFRATSTSPNSQSSK. Ser-1242, Ser-1246, Ser-1248, Ser-1249, and Ser-1263 each carry phosphoserine. 4 stretches are compositionally biased toward basic and acidic residues: residues 1261 to 1297, 1305 to 1330, 1381 to 1418, and 1429 to 1446; these read RGSETDTDSEIHESASDKDSLSKGKLPKREERPENKK, FKPDNHVRIDNRLLEKPYVRDDDKAK, EVPKPEDGEPPRRHEQFIPIAADKRPPKFERKFDPARE, and PRQDKPPRFRRLREREAA. Residues Thr-1265 and Thr-1267 each carry the phosphothreonine modification. 2 stretches are compositionally biased toward polar residues: residues 1457-1469 and 1477-1491; these read TNGTVNNVAQEPV and GNKTPDLSNQNSSDQ. The segment covering 1505–1517 has biased composition (basic and acidic residues); sequence FNERRERDEKKNA. A Phosphoserine modification is found at Ser-1544. Composition is skewed to basic and acidic residues over residues 1620 to 1634 and 1692 to 1704; these read NSKDSTGKKREDPKP and RLQDEERRKKEEQ. Residues 1682-1717 are a coiled coil; it reads TEVVSKKQQKRLQDEERRKKEEQVIQVWNKKNANEK. Positions 1742 to 1785 are enriched in low complexity; that stretch reads SSASVPPLASAPLPPSTSASVPASTSAPLPATLTPVPASTSAPV. Pro residues predominate over residues 1913–1929; that stretch reads APAPTPVSAPNPAPPAP. Residues 1943–1952 show a composition bias toward low complexity; sequence PLQTTSQSSK. At Thr-1965 the chain carries Phosphothreonine. Over residues 1976–1986 the composition is skewed to polar residues; sequence KSIQTPQSHGT. Ser-1983 and Ser-2013 each carry phosphoserine. Polar residues predominate over residues 2019–2035; that stretch reads SVSAWNKPLTSFGSAPS. Over residues 2075–2088 the composition is skewed to basic and acidic residues; it reads KSADKIPEPKEQRQ. Ser-2105 is subject to Phosphoserine. Positions 2108–2132 are enriched in basic and acidic residues; it reads ENKEHKPGPIGKERSLKNRKVKDAQ. Ser-2143 carries the post-translational modification Phosphoserine. A compositionally biased stretch (basic and acidic residues) spans 2257–2267; sequence WENSPNVREKG. Residue Ser-2260 is modified to Phosphoserine. Polar residues predominate over residues 2269–2290; the sequence is PVTSTAPPIATGVSSSASGPST. Positions 2320-2334 are enriched in low complexity; the sequence is TYTTSSLSTKSTTTS. Phosphothreonine occurs at positions 2673 and 2682. The span at 2679 to 2701 shows a compositional bias: polar residues; sequence RSTTPTSSPFRATSTSPNSQSSK. 2 positions are modified to phosphoserine: Ser-2686 and Ser-2694. An Omega-N-methylarginine modification is found at Arg-2814. Residue Arg-2823 is modified to Asymmetric dimethylarginine; alternate. Arg-2823 carries the omega-N-methylarginine; alternate modification. Residues 2824-2833 are compositionally biased toward polar residues; sequence FFSEQQQSKQ. The segment at 2824 to 2896 is disordered; that stretch reads FFSEQQQSKQ…QAIKTEETKS (73 aa).

As to expression, overexpressed in bladder cancer.

The protein localises to the cytoplasm. It is found in the stress granule. Functionally, required for efficient formation of stress granules. The sequence is that of Protein PRRC2C from Homo sapiens (Human).